The following is a 479-amino-acid chain: Sucrose-6-phosphate hydrolase (479 aa).

Residues 44–47, Q63, 106–107, 166–167, and E223 each bind substrate; these read LLND, YS, and RD. D47 is an active-site residue.

It belongs to the glycosyl hydrolase 32 family.

It localises to the cytoplasm. The catalysed reaction is Hydrolysis of terminal non-reducing beta-D-fructofuranoside residues in beta-D-fructofuranosides.. It participates in glycan biosynthesis; sucrose metabolism. The polypeptide is Sucrose-6-phosphate hydrolase (scrB) (Streptococcus mutans serotype c (strain ATCC 700610 / UA159)).